The primary structure comprises 473 residues: Putative sulfoquinovose importer (473 aa).

The next 11 membrane-spanning stretches (helical) occupy residues 18–38 (AYGV…LYLL), 45–65 (LGMP…FTAF), 88–108 (PFIL…FFAT), 110–130 (FTLP…GLFY), 160–180 (GGAT…QALF), 187–207 (GYLI…WWCF), 239–259 (LLVL…KLAI), 276–296 (WMGF…PAAV), 317–337 (ILNF…CIAF), 380–400 (ISAA…GYIP), and 415–435 (LIFL…GFFY).

The protein belongs to the sodium:galactoside symporter (TC 2.A.2) family.

The protein resides in the cell inner membrane. Its function is as follows. Could be involved in sulfoquinovose import. This is Putative sulfoquinovose importer (yihO) from Salmonella typhimurium (strain LT2 / SGSC1412 / ATCC 700720).